Reading from the N-terminus, the 430-residue chain is uncharacterized protein (430 aa).

The next 10 membrane-spanning stretches (helical) occupy residues 13-33, 47-67, 88-108, 138-158, 228-248, 264-284, 296-316, 319-339, 358-378, and 383-403; these read FFAALASQMGTTVGNMAFAFF, LAELMYSLPTIFVFLIVGVVA, VVLFFTLFTGNIPLVFCILFI, GLNQMLFSIFMVFGVGIGAFM, LIFGFFIFGFVNGGFAVLPMF, SVFTIALGFGLLAGSVIGTLI, IPIFIAGLLIFVLGYTNILWV, AAAFALGMCIGPINIAIGGWM, FMMFAQSLTLGLVALLFPKFV, and YLYYGMGVIILLVFIFYFIAL.

The protein belongs to the major facilitator superfamily.

It localises to the cell membrane. This is an uncharacterized protein from Bacillus subtilis (strain 168).